Here is a 770-residue protein sequence, read N- to C-terminus: Pyrophosphate-energized vacuolar membrane proton pump 1 (770 aa).

Topologically, residues 1–9 (MVAPALLPE) are intravacuolar. A helical transmembrane segment spans residues 10 to 36 (LWTEILVPICAVIGIAFSLFQWYVVSR). Residues 37-88 (VKLTSDLGASSSGGANNGKNGYGDYLIEEEEGVNDQSVVAKCAEIQTAISEG) lie on the Cytoplasmic side of the membrane. The helical transmembrane segment at 89–118 (ATSFLFTEYKYVGVFMIFFAAVIFVFLGSV) threads the bilayer. The Intravacuolar segment spans residues 119–139 (EGFSTDNKPCTYDTTRTCKPA). Cys-128 and Cys-136 are disulfide-bonded. Residues 140–167 (LATAAFSTIAFVLGAVTSVLSGFLGMKI) traverse the membrane as a helical segment. Residues 168–190 (ATYANARTTLEARKGVGKAFIVA) lie on the Cytoplasmic side of the membrane. Residues 191-220 (FRSGAVMGFLLAASGLLVLYITINVFKIYY) traverse the membrane as a helical segment. Over 221 to 223 (GDD) the chain is Intravacuolar. The helical transmembrane segment at 224–252 (WEGLFEAITGYGLGGSSMALFGRVGGGIY) threads the bilayer. At 253 to 290 (TKAADVGADLVGKIERNIPEDDPRNPAVIADNVGDNVG) the chain is on the cytoplasmic side. Residue Lys-254 coordinates substrate. Mg(2+)-binding residues include Asp-257, Asp-261, and Asp-287. Residues 291 to 316 (DIAGMGSDLFGSYAEASCAALVVASI) traverse the membrane as a helical segment. Topologically, residues 317-324 (SSFGINHD) are intravacuolar. A helical membrane pass occupies residues 325 to 350 (FTAMCYPLLISSMGILVCLITTLFAT). The Cytoplasmic portion of the chain corresponds to 351–358 (DFFEIKLV). Residues 359–386 (KEIEPALKNQLIISTVIMTVGIAIVSWV) traverse the membrane as a helical segment. The Intravacuolar segment spans residues 387–405 (GLPTSFTIFNFGTQKVVKN). Residues 406-429 (WQLFLCVCVGLWAGLIIGFVTEYY) traverse the membrane as a helical segment. Residues 430-451 (TSNAYSPVQDVADSCRTGAATN) lie on the Cytoplasmic side of the membrane. Residues 452-476 (VIFGLALGYKSVIIPIFAIAISIFV) traverse the membrane as a helical segment. Over 477 to 482 (SFSFAA) the chain is Intravacuolar. Residues 483-509 (MYGVAVAALGMLSTIATGLAIDAYGPI) traverse the membrane as a helical segment. Over 510-538 (SDNAGGIAEMAGMSHRIRERTDALDAAGN) the chain is Cytoplasmic. Residues Asp-511 and Asn-538 each coordinate Mg(2+). The helical transmembrane segment at 539–567 (TTAAIGKGFAIGSAALVSLALFGAFVSRA) threads the bilayer. The Intravacuolar portion of the chain corresponds to 568–577 (GIHTVDVLTP). Residues 578–606 (KVIIGLLVGAMLPYWFSAMTMKSVGSAAL) traverse the membrane as a helical segment. At 607-635 (KMVEEVRRQFNTIPGLMEGTAKPDYATCV) the chain is on the cytoplasmic side. Residues 636-664 (KISTDASIKEMIPPGCLVMLTPLIVGFFF) form a helical membrane-spanning segment. A topological domain (intravacuolar) is located at residue Gly-665. The helical transmembrane segment at 666–693 (VETLSGVLAGSLVSGVQIAISASNTGGA) threads the bilayer. The Cytoplasmic segment spans residues 694–736 (WDNAKKYIEAGVSEHAKSLGPKGSEPHKAAVIGDTIGDPLKDT). Residues Asp-695 and Asp-731 each coordinate Mg(2+). Lys-734 provides a ligand contact to substrate. A helical membrane pass occupies residues 737-762 (SGPSLNILIKLMAVESLVFAPFFATH). The Intravacuolar segment spans residues 763 to 770 (GGILFKYF).

The protein belongs to the H(+)-translocating pyrophosphatase (TC 3.A.10) family. K(+)-stimulated subfamily. As to quaternary structure, monomer. Ubiquitous (at protein level). Mostly expressed in vascular tissues, meristems and root pericycle.

The protein resides in the vacuole membrane. It is found in the endosome membrane. The protein localises to the cell membrane. The catalysed reaction is diphosphate + H2O + H(+)(in) = 2 phosphate + 2 H(+)(out). With respect to regulation, activated by K(+) and Mg(2+). Inhibited by Ca(2+), N,N'-dicyclohexylcarbodiimide (DCCD), N-ethylmaleimide (NEM) and aminomethylenediphosphonate (AMDP), and, to a lower extent, by fluoride (KF). Functionally, contributes to the transtonoplast (from cytosol to vacuole lumen) H(+)-electrochemical potential difference. It establishes a proton gradient of similar and often greater magnitude than the H(+)-ATPase on the same membrane. In addition, facilitates auxin transport by modulating apoplastic pH and regulates auxin-mediated developmental processes. Confers tolerance to NaCl and to drought by increasing ion retention. In Arabidopsis thaliana (Mouse-ear cress), this protein is Pyrophosphate-energized vacuolar membrane proton pump 1 (AVP1).